The primary structure comprises 20 residues: Pregnancy-associated glycoprotein 67A (20 aa).

2 N-linked (GlcNAc...) asparagine glycosylation sites follow: Asn-4 and Asn-20.

The protein belongs to the peptidase A1 family. In terms of tissue distribution, chorionic epithelium (trophectoderm) and placental cotyledons.

The protein resides in the secreted. Its subcellular location is the extracellular space. This is Pregnancy-associated glycoprotein 67A from Bison bonasus (European bison).